We begin with the raw amino-acid sequence, 281 residues long: Apolipoprotein Eb (281 aa).

Residues 1-18 (MRSLVVFFALAVLTGCQA) form the signal peptide. The propeptide occupies 19–24 (RSLFQA). The tract at residues 34-66 (MVDRFWQYVSELNTQTDGMVQNIKGSQLSRELD) is 3 X approximate tandem repeats. Repeat copies occupy residues 67-88 (TLIT…TQMT), 89-110 (PYAS…GKLQ), 111-132 (TDMT…TMME), 133-154 (QNAD…KRLN), 155-176 (KDTE…SRAS), 177-199 (QNAD…GATQ), 200-227 (KLGA…GALK), 228-249 (EKLE…DELT), and 254-281 (PYSQ…PTQA). The segment at 67-281 (TLITDTMAEL…EATAALPTQA (215 aa)) is 9 X 22 AA approximate tandem repeats.

Belongs to the apolipoprotein A1/A4/E family. Homotetramer.

The protein resides in the secreted. It is found in the extracellular space. It localises to the extracellular matrix. Its function is as follows. APOE is an apolipoprotein, a protein associating with lipid particles, that mainly functions in lipoprotein-mediated lipid transport between organs via the plasma and interstitial fluids. APOE is a core component of plasma lipoproteins and is involved in their production, conversion and clearance. Apolipoproteins are amphipathic molecules that interact both with lipids of the lipoprotein particle core and the aqueous environment of the plasma. The polypeptide is Apolipoprotein Eb (apoeb) (Danio rerio (Zebrafish)).